A 484-amino-acid chain; its full sequence is Probable autolysin PH (484 aa).

One can recognise a Peptidase C51 domain in the interval 5-148 (KNQAEKWFDN…YYDDPMYFIR (144 aa)). Residues 181–363 (IMLVAGHGYN…YSKLIAGAIH (183 aa)) form the MurNAc-LAA domain. One can recognise an SH3b domain in the interval 402-472 (KETGYYTVAN…IATGEVDKAG (71 aa)).

The enzyme catalyses Hydrolyzes the link between N-acetylmuramoyl residues and L-amino acid residues in certain cell-wall glycopeptides.. Its function is as follows. Has weak lytic activity toward S.aureus cells. Full-length protein has no activity, but fusion of the Peptidase C51 domain to the lysostaphin SH3 cell wall binding domain yields an active chimeric enzyme, suggesting that PH may be functional. This is Probable autolysin PH from Staphylococcus aureus (strain NCTC 8325 / PS 47).